A 272-amino-acid chain; its full sequence is Eukaryotic translation initiation factor 3 subunit G (272 aa).

Disordered stretches follow at residues 1–28 (MPALDEIKSSWADEVELDSGSLPPPTEI) and 157–188 (APTTAKSGKYVPPSMRDSQKPGMGGNPRGRDD). In terms of domain architecture, RRM spans 190-268 (TAIRISNLSE…LILNVEWSKP (79 aa)).

Belongs to the eIF-3 subunit G family. Component of the eukaryotic translation initiation factor 3 (eIF-3) complex.

Its subcellular location is the cytoplasm. Its function is as follows. RNA-binding component of the eukaryotic translation initiation factor 3 (eIF-3) complex, which is involved in protein synthesis of a specialized repertoire of mRNAs and, together with other initiation factors, stimulates binding of mRNA and methionyl-tRNAi to the 40S ribosome. The eIF-3 complex specifically targets and initiates translation of a subset of mRNAs involved in cell proliferation. This subunit can bind 18S rRNA. In Aedes aegypti (Yellowfever mosquito), this protein is Eukaryotic translation initiation factor 3 subunit G.